Consider the following 218-residue polypeptide: Outer-membrane lipoprotein LolB (218 aa).

An N-terminal signal peptide occupies residues 1-24 (MNNLSYLTKIPLIWVLLSVTLLSA). Residue Cys25 is the site of N-palmitoyl cysteine attachment. Cys25 carries the S-diacylglycerol cysteine lipid modification.

Belongs to the LolB family. As to quaternary structure, monomer.

The protein resides in the cell outer membrane. Functionally, plays a critical role in the incorporation of lipoproteins in the outer membrane after they are released by the LolA protein. In Shewanella sediminis (strain HAW-EB3), this protein is Outer-membrane lipoprotein LolB.